The primary structure comprises 208 residues: FMN-dependent NADH:quinone oxidoreductase (208 aa).

Residues 17 to 19 (SNS), 99 to 102 (MWNL), and 143 to 146 (SRGG) contribute to the FMN site.

This sequence belongs to the azoreductase type 1 family. Homodimer. Requires FMN as cofactor.

It carries out the reaction 2 a quinone + NADH + H(+) = 2 a 1,4-benzosemiquinone + NAD(+). The catalysed reaction is N,N-dimethyl-1,4-phenylenediamine + anthranilate + 2 NAD(+) = 2-(4-dimethylaminophenyl)diazenylbenzoate + 2 NADH + 2 H(+). Quinone reductase that provides resistance to thiol-specific stress caused by electrophilic quinones. Functionally, also exhibits azoreductase activity. Catalyzes the reductive cleavage of the azo bond in aromatic azo compounds to the corresponding amines. The chain is FMN-dependent NADH:quinone oxidoreductase from Staphylococcus aureus (strain Mu50 / ATCC 700699).